We begin with the raw amino-acid sequence, 278 residues long: Trehalose monomycolate transport factor A (278 aa).

A topological domain (periplasmic) is located at residue M1. Residues 2–22 (VPLWFTLSALCFVGAAVLLYV) form a helical membrane-spanning segment. Residues 23–278 (DIDRRRGLGR…NGREASHFQR (256 aa)) lie on the Cytoplasmic side of the membrane. Residues 200 to 278 (PPVPQNGSQA…NGREASHFQR (79 aa)) form a disordered region. Basic and acidic residues predominate over residues 269 to 278 (NGREASHFQR).

Monomer. Interacts (via N-terminus) with MmpL3; active trehalose monomycolate (TMM) biosynthesis is not required for the complex formation. Interacts with MSMEG_5308.

It localises to the cell inner membrane. Its subcellular location is the cell septum. The protein localises to the cell tip. Required for MmpL3-dependent trehalose monomycolate (TMM) transport to the cell wall. Required for growth and cell elongation. The chain is Trehalose monomycolate transport factor A from Mycolicibacterium smegmatis (strain ATCC 700084 / mc(2)155) (Mycobacterium smegmatis).